The primary structure comprises 471 residues: Ribulose bisphosphate carboxylase large chain (471 aa).

N115 and T165 together coordinate substrate. K167 functions as the Proton acceptor in the catalytic mechanism. Residue K169 participates in substrate binding. K193, D195, and E196 together coordinate Mg(2+). N6-carboxylysine is present on K193. The Proton acceptor role is filled by H286. Substrate contacts are provided by R287, H319, and S371.

This sequence belongs to the RuBisCO large chain family. Type I subfamily. Heterohexadecamer of 8 large chains and 8 small chains. The cofactor is Mg(2+).

The protein resides in the carboxysome. The enzyme catalyses 2 (2R)-3-phosphoglycerate + 2 H(+) = D-ribulose 1,5-bisphosphate + CO2 + H2O. The catalysed reaction is D-ribulose 1,5-bisphosphate + O2 = 2-phosphoglycolate + (2R)-3-phosphoglycerate + 2 H(+). In terms of biological role, ruBisCO catalyzes two reactions: the carboxylation of D-ribulose 1,5-bisphosphate, the primary event in carbon dioxide fixation, as well as the oxidative fragmentation of the pentose substrate in the photorespiration process. Both reactions occur simultaneously and in competition at the same active site. This is Ribulose bisphosphate carboxylase large chain from Prochlorococcus marinus (strain MIT 9515).